The following is a 553-amino-acid chain: uncharacterized protein (553 aa).

An N-terminal signal peptide occupies residues 1-28 (MRYARHASRYSLFTLAVSAALLPGAGWA).

This is an uncharacterized protein from Pseudomonas aeruginosa (strain ATCC 15692 / DSM 22644 / CIP 104116 / JCM 14847 / LMG 12228 / 1C / PRS 101 / PAO1).